The following is a 120-amino-acid chain: Glycine cleavage system H protein (120 aa).

One can recognise a Lipoyl-binding domain in the interval 17–99; sequence VATVGITAHA…QGDGWLYRLK (83 aa). K58 carries the post-translational modification N6-lipoyllysine.

The protein belongs to the GcvH family. In terms of assembly, the glycine cleavage system is composed of four proteins: P, T, L and H. The cofactor is (R)-lipoate.

Functionally, the glycine cleavage system catalyzes the degradation of glycine. The H protein shuttles the methylamine group of glycine from the P protein to the T protein. This is Glycine cleavage system H protein from Methylorubrum extorquens (strain PA1) (Methylobacterium extorquens).